Reading from the N-terminus, the 189-residue chain is Glycerol-3-phosphate acyltransferase (189 aa).

The next 4 membrane-spanning stretches (helical) occupy residues 1–21 (MVWL…AILL), 79–99 (QQAW…YFNF), 113–133 (LGLY…VFAF), and 151–171 (LLAW…GVIV).

This sequence belongs to the PlsY family. Probably interacts with PlsX.

It localises to the cell inner membrane. The enzyme catalyses an acyl phosphate + sn-glycerol 3-phosphate = a 1-acyl-sn-glycero-3-phosphate + phosphate. It functions in the pathway lipid metabolism; phospholipid metabolism. Its function is as follows. Catalyzes the transfer of an acyl group from acyl-phosphate (acyl-PO(4)) to glycerol-3-phosphate (G3P) to form lysophosphatidic acid (LPA). This enzyme utilizes acyl-phosphate as fatty acyl donor, but not acyl-CoA or acyl-ACP. The polypeptide is Glycerol-3-phosphate acyltransferase (Azotobacter vinelandii (strain DJ / ATCC BAA-1303)).